Consider the following 545-residue polypeptide: Chaperonin GroEL 1 (545 aa).

ATP-binding positions include 30–33, Lys-51, 87–91, Gly-415, and Asp-495; these read TLGP and DGTTT.

It belongs to the chaperonin (HSP60) family. Forms a cylinder of 14 subunits composed of two heptameric rings stacked back-to-back. Interacts with the co-chaperonin GroES.

Its subcellular location is the cytoplasm. It carries out the reaction ATP + H2O + a folded polypeptide = ADP + phosphate + an unfolded polypeptide.. In terms of biological role, together with its co-chaperonin GroES, plays an essential role in assisting protein folding. The GroEL-GroES system forms a nano-cage that allows encapsulation of the non-native substrate proteins and provides a physical environment optimized to promote and accelerate protein folding. The protein is Chaperonin GroEL 1 of Rhizobium meliloti (strain 1021) (Ensifer meliloti).